The chain runs to 370 residues: Fe(2+) transport protein 2 (370 aa).

Positions 1–25 are cleaved as a signal peptide; the sequence is MMMSSSQTPVRIAFVFLVILAATDA. Over 26 to 55 the chain is Extracellular; it reads HSDHRTPPPACGGAAVGGECHSVARALRLK. Residues 56–76 traverse the membrane as a helical segment; sequence LIAIPAILAASVAGVCLPLFA. Residues 77-85 are Cytoplasmic-facing; the sequence is RSVPALRPD. A helical transmembrane segment spans residues 86 to 106; sequence GGLFAVVKAFASGVILGTGYM. Residues 107 to 130 lie on the Extracellular side of the membrane; the sequence is HVLPDSFNDLTSPCLPRKPWSEFP. Residues 131–151 traverse the membrane as a helical segment; it reads FAAFVAMLAAVFTLMVDSLML. Topologically, residues 152-215 are cytoplasmic; it reads TFHTRGSKGR…TTKAQLLRNR (64 aa). A helical transmembrane segment spans residues 216-236; sequence VIVQVLEMGIVVHSVVIGLGM. The Extracellular segment spans residues 237–247; the sequence is GASQNVCTIRP. The chain crosses the membrane as a helical span at residues 248 to 268; that stretch reads LVAALCFHQMFEGMGLGGCIL. At 269 to 278 the chain is on the cytoplasmic side; it reads QAGYGGRTRS. A helical transmembrane segment spans residues 279–299; it reads ALVFFFSTTTPFGIALGLALT. Residues 300–309 are Extracellular-facing; the sequence is RVYSDSSPTA. The chain crosses the membrane as a helical span at residues 310 to 330; it reads LVVVGLLNAASAGLLHYMALV. The Cytoplasmic segment spans residues 331–349; the sequence is ELLAADFMGPKLQGNVRLQ. The chain crosses the membrane as a helical span at residues 350-370; the sequence is LAASLAILLGAGGMSVMAKWA.

The protein belongs to the ZIP transporter (TC 2.A.5) family.

The protein localises to the cell membrane. Its function is as follows. Iron transporter that may play a role in the uptake of iron from the rhizosphere across the plasma membrane in the root epidermal layer. The polypeptide is Fe(2+) transport protein 2 (IRT2) (Oryza sativa subsp. japonica (Rice)).